The sequence spans 390 residues: Succinate--CoA ligase [ADP-forming] subunit beta (390 aa).

An ATP-grasp domain is found at 9–244 (KSLFQQYGIP…ISQEDVREAK (236 aa)). ATP-binding residues include Lys-46, Glu-99, Leu-102, and Glu-107. Residues Asn-199 and Asp-213 each contribute to the Mg(2+) site. Substrate-binding positions include Asn-264 and 321-323 (GIV).

This sequence belongs to the succinate/malate CoA ligase beta subunit family. As to quaternary structure, heterotetramer of two alpha and two beta subunits. Mg(2+) serves as cofactor.

The enzyme catalyses succinate + ATP + CoA = succinyl-CoA + ADP + phosphate. It catalyses the reaction GTP + succinate + CoA = succinyl-CoA + GDP + phosphate. It functions in the pathway carbohydrate metabolism; tricarboxylic acid cycle; succinate from succinyl-CoA (ligase route): step 1/1. Functionally, succinyl-CoA synthetase functions in the citric acid cycle (TCA), coupling the hydrolysis of succinyl-CoA to the synthesis of either ATP or GTP and thus represents the only step of substrate-level phosphorylation in the TCA. The beta subunit provides nucleotide specificity of the enzyme and binds the substrate succinate, while the binding sites for coenzyme A and phosphate are found in the alpha subunit. The sequence is that of Succinate--CoA ligase [ADP-forming] subunit beta from Hydrogenovibrio crunogenus (strain DSM 25203 / XCL-2) (Thiomicrospira crunogena).